A 330-amino-acid chain; its full sequence is Endochitinase Ziz m 1.0101 (330 aa).

An N-terminal signal peptide occupies residues 1-24 (MVPQAKLVVASLILTSALIQTSEA). Positions 26–330 (GGIATYWGQY…LRTKFMYQNA (305 aa)) constitute a GH18 domain. Disulfide bonds link cysteine 47-cysteine 90, cysteine 77-cysteine 80, and cysteine 187-cysteine 219. The tract at residues 72 to 86 (NISGHCSDCTFLGEE) is binds to IgE in 70% of the 10 patients tested allergic to Indian jujube and latex. Residues 292-301 (VWNRYYDLKT) form a binds to IgE in 100% of the 10 patients tested allergic to Indian jujube and latex; sufficient for prediction of the presence of allergic reactions in these patients region. 2 binds to IgE in 70% of the 10 patients tested allergic to Indian jujube and latex regions span residues 300-311 (KTNYSSSIILEY) and 309-320 (LEYVNSGTKYLP).

It belongs to the glycosyl hydrolase 18 family. Chitinase class II subfamily.

It localises to the secreted. It catalyses the reaction Random endo-hydrolysis of N-acetyl-beta-D-glucosaminide (1-&gt;4)-beta-linkages in chitin and chitodextrins.. Defense against chitin containing fungal pathogens. The chain is Endochitinase Ziz m 1.0101 from Ziziphus mauritiana (Indian jujube).